We begin with the raw amino-acid sequence, 216 residues long: Adenylate kinase (216 aa).

An ATP-binding site is contributed by 10 to 15 (GAGKGT). Residues 30–59 (STGDIFRANIKEKTPLGIEAKRYIDNGQLV) form an NMP region. AMP is bound by residues threonine 31, arginine 36, 57-59 (QLV), 85-88 (GFPR), and glutamine 92. Residues 126-163 (GRRVCTSCGASYHIRFNPPKIEGKCDICDNELIQRKDD) form an LID region. An ATP-binding site is contributed by arginine 127. The Zn(2+) site is built by cysteine 130 and cysteine 133. Position 136-137 (136-137 (SY)) interacts with ATP. The Zn(2+) site is built by cysteine 150 and cysteine 153. The AMP site is built by arginine 160 and arginine 171. Glutamate 199 contacts ATP.

Belongs to the adenylate kinase family. In terms of assembly, monomer.

It is found in the cytoplasm. The catalysed reaction is AMP + ATP = 2 ADP. It participates in purine metabolism; AMP biosynthesis via salvage pathway; AMP from ADP: step 1/1. Its function is as follows. Catalyzes the reversible transfer of the terminal phosphate group between ATP and AMP. Plays an important role in cellular energy homeostasis and in adenine nucleotide metabolism. The polypeptide is Adenylate kinase (Clostridium botulinum (strain ATCC 19397 / Type A)).